A 509-amino-acid chain; its full sequence is Bifunctional purine biosynthesis protein PurH (509 aa).

An MGS-like domain is found at 1–146 (MTIQKINRVL…KNWYRVGVCV (146 aa)).

This sequence belongs to the PurH family.

The enzyme catalyses (6R)-10-formyltetrahydrofolate + 5-amino-1-(5-phospho-beta-D-ribosyl)imidazole-4-carboxamide = 5-formamido-1-(5-phospho-D-ribosyl)imidazole-4-carboxamide + (6S)-5,6,7,8-tetrahydrofolate. It carries out the reaction IMP + H2O = 5-formamido-1-(5-phospho-D-ribosyl)imidazole-4-carboxamide. The protein operates within purine metabolism; IMP biosynthesis via de novo pathway; 5-formamido-1-(5-phospho-D-ribosyl)imidazole-4-carboxamide from 5-amino-1-(5-phospho-D-ribosyl)imidazole-4-carboxamide (10-formyl THF route): step 1/1. It functions in the pathway purine metabolism; IMP biosynthesis via de novo pathway; IMP from 5-formamido-1-(5-phospho-D-ribosyl)imidazole-4-carboxamide: step 1/1. In Natranaerobius thermophilus (strain ATCC BAA-1301 / DSM 18059 / JW/NM-WN-LF), this protein is Bifunctional purine biosynthesis protein PurH.